The primary structure comprises 132 residues: MAAQKQAARKPRRRDRKSVPVGQAHIKSTFNNTIISITDPSGAVVSWASGGDVGFKGSRKSTPYAAGMAAESAARKAMEHGLKKVDVFVKGPGSGRETAIRSLQSAGLEVGSITDVTPQAHNGVRPPKRRRV.

Positions 1-24 are disordered; that stretch reads MAAQKQAARKPRRRDRKSVPVGQA. A compositionally biased stretch (basic residues) spans 7 to 16; the sequence is AARKPRRRDR.

The protein belongs to the universal ribosomal protein uS11 family. As to quaternary structure, part of the 30S ribosomal subunit. Interacts with proteins S7 and S18. Binds to IF-3.

In terms of biological role, located on the platform of the 30S subunit, it bridges several disparate RNA helices of the 16S rRNA. Forms part of the Shine-Dalgarno cleft in the 70S ribosome. The chain is Small ribosomal subunit protein uS11 from Bifidobacterium adolescentis (strain ATCC 15703 / DSM 20083 / NCTC 11814 / E194a).